The primary structure comprises 1216 residues: MATTSNMFLYSLSIQPPSTITRAILGQFSGTKEQQIVAASGSRLTLYRPDPTQGKVVPLMSHDVFGIIRDLASFRLAGSSKDYLIIASDSGRITIVEYLPAQNRFSRIHLETFGKSGVRRVVPGQYLAADPKGRACLIASVERCKLVYVLNRNSQAELTISSPLEAHKNGTLTLSLVALDVGYSNPVFAALEVDYSEVDQDPKGDAAQNVETVLNYYELDLGLNHVVRKWFDVVDSTASMLFQVPGGSDGPSGVLVCGEENITYRHSNQDAFRVPIPRRKGATEDPSRKRNIVSGVMHKLKGSAGAFFFLLQTEDGDLFKVTIDMVEDAEGNPTGEVRRLKIKYFDTIPVSNNLCILKSGFLFVASEFGNHLFYQFEKLGDDDEELEFFSSDFPVDPKEPYEPVYFYPRPTENLALVESIDSMNPLMDLKVANLTEEDAPQIYTVSGKGARSTFRMLKHGLEVNEIVASQLPGTPSAVWTTKLRRDDEYDAYIVLSFTNGTLVLSIGETVEEVSDTGFLSSVPTLAVQQLGDDGLVQVHPKGIRHIRNGVVNEWSSPQHRSIVAAATNERQVAVALSSGEIVYFEMDTDGSLAEYDEKKEMFGTVTSLSLGEVPEGRLRSSYLAVGCDDCTVRILSLDPESTLESKSVQALTAAPSALSIMSMEDSSSGGTTLYLHIGLNSGVYLRTVLDEVTGELTDTRQKFLGPKAVRLFQVSVQKRTCVLALSSRSWLGFSDPVTKGFTMTPLNYEELEWGWNFVSEQCEEGMVGVNGQFLRIFAIEKLGDNVIQKSIPLTYTPRKLAKHPTQRIFYTIEADNNTLAPELREQLMAAPTAVNGDARVLPPDEFGYPRGNGRWASCISVVDPLGDGEELEPGVVQRIDLDNNEAALSMAVVSFASQDGESFLVVGTGKDMVVNPRRFTEGYIHVYRFSEDGRELEFIHKTKVEEPPTALLPFQGRLVAGIGRMLRIYDLGLRQLLRKAQAEVAPQLIVSLNTQGSRIIVGDVQHGLIYVAYKSETNRLIPFADDTIARWTTCTTMVDYDSTAGADKFGNLWILRCPEKASQESDEPGSEVHLVHSRDYLHGTSNRLALMAHVYTQDIPTSICKTNLVVGGQEVLLWGGFQGTIGVLIPFVSREDADFFQSLEQHLRSEDPPLAGRDHLMYRGCYVPVKGVIDGDLCERYTMLPNDKKQMIAGELDRSVREIERKISDIRTRSAF.

This sequence belongs to the RSE1 family. As to quaternary structure, associated with the spliceosome.

The protein localises to the nucleus. Its function is as follows. Involved in pre-mRNA splicing and cell cycle control. The protein is Pre-mRNA-splicing factor RSE1 (RSE1) of Pyricularia oryzae (strain 70-15 / ATCC MYA-4617 / FGSC 8958) (Rice blast fungus).